Reading from the N-terminus, the 458-residue chain is F-box/WD repeat-containing protein 9 (458 aa).

The residue at position 1 (Met-1) is an N-acetylmethionine. Disordered regions lie at residues 1–30 (MELPLGRCDDSRTWDDDSDPESETDPDAQA) and 42–64 (KSGLAFSRPSQLSTPAASPSASE). Residues 16 to 26 (DDSDPESETDP) are compositionally biased toward acidic residues. Ser-18 bears the Phosphoserine mark. Thr-55 is subject to Phosphothreonine. A Phosphoserine modification is found at Ser-59. Residues 76–123 (EPGLLSLPPELLLEICSYLDARLVLHVLSRVCHALRDLVSDHVTWRLR) enclose the F-box domain. WD repeat units lie at residues 171-210 (GHVASVDSVLLLQGGSLCLSGSRDRNVNLWDLRQLGTESN), 220-261 (KRNS…QQFG), 264-301 (KASSAVLCLSYLPDILVTGTYDKKVTIYDPRAGPALLK), 305-342 (LHSRPVLTLLADDRHIISGSEDHTLVVVDRRANSVLQR), 344-381 (QLDSYLLCMSYQEPQLWAGDNQGLLHVFANRNGCFQLI), 387-424 (GHSFPITGIQYSVGALYTTSTDKTIRVHVPTDPPRTIC), and 427-458 (RHDNGLNRVCAEGNLVVAGSGDLSLEVWRLQA).

Interacts with SKP1 and CUL1.

Functionally, substrate-recognition component of the SCF (SKP1-CUL1-F-box protein)-type E3 ubiquitin ligase complex. The protein is F-box/WD repeat-containing protein 9 (FBXW9) of Homo sapiens (Human).